Consider the following 146-residue polypeptide: Cytidine deaminase (146 aa).

Residues 13–140 (ECVQQLLVCS…ELLPSSFGPE (128 aa)) enclose the CMP/dCMP-type deaminase domain. A substrate-binding site is contributed by 54-60 (NIENACY). Cys-65 contacts Zn(2+). Catalysis depends on Glu-67, which acts as the Proton donor. Zn(2+)-binding residues include Cys-99 and Cys-102.

This sequence belongs to the cytidine and deoxycytidylate deaminase family. Homotetramer. Requires Zn(2+) as cofactor. In terms of tissue distribution, highly expressed in granulocytes while expression is very low in fibroblasts, chondrocytes, monocytes, and T- as well as B-cell lines.

The enzyme catalyses cytidine + H2O + H(+) = uridine + NH4(+). It catalyses the reaction 2'-deoxycytidine + H2O + H(+) = 2'-deoxyuridine + NH4(+). Functionally, this enzyme scavenges exogenous and endogenous cytidine and 2'-deoxycytidine for UMP synthesis. In Homo sapiens (Human), this protein is Cytidine deaminase.